A 276-amino-acid chain; its full sequence is Putative pyruvate, phosphate dikinase regulatory protein (276 aa).

G154 to S161 is a binding site for ADP.

This sequence belongs to the pyruvate, phosphate/water dikinase regulatory protein family. PDRP subfamily.

The enzyme catalyses N(tele)-phospho-L-histidyl/L-threonyl-[pyruvate, phosphate dikinase] + ADP = N(tele)-phospho-L-histidyl/O-phospho-L-threonyl-[pyruvate, phosphate dikinase] + AMP + H(+). It catalyses the reaction N(tele)-phospho-L-histidyl/O-phospho-L-threonyl-[pyruvate, phosphate dikinase] + phosphate + H(+) = N(tele)-phospho-L-histidyl/L-threonyl-[pyruvate, phosphate dikinase] + diphosphate. Its function is as follows. Bifunctional serine/threonine kinase and phosphorylase involved in the regulation of the pyruvate, phosphate dikinase (PPDK) by catalyzing its phosphorylation/dephosphorylation. This is Putative pyruvate, phosphate dikinase regulatory protein from Wolbachia pipientis wMel.